Consider the following 325-residue polypeptide: ADP-ribose glycohydrolase MACROD1 (325 aa).

Residues 21–55 (LGAPRPWPGPSPGATRTRSSACGPPASLSAHHPRA) form a disordered region. 3 positions are modified to N6-succinyllysine: Lys-96, Lys-103, and Lys-129. Residue Lys-138 forms a Glycyl lysine isopeptide (Lys-Gly) (interchain with G-Cter in SUMO2) linkage. In terms of domain architecture, Macro spans 141–322 (EPKYKKDKQL…IYRERLPHYF (182 aa)). Position 159–161 (159–161 (GDI)) interacts with substrate. Lys-163 is subject to N6-acetyllysine. Substrate is bound by residues 172-174 (AAN), 179-184 (GGGGVD), 267-273 (ISTGVFG), and Phe-306.

The protein belongs to the MacroD-type family. MacroD1/2-like subfamily. Interacts with ESR1; Interacts in a manner that is estrogen independent but is enhanced by estrogen. Interacts (via macro domain) with AR.

The protein localises to the nucleus. The enzyme catalyses 3''-O-acetyl-ADP-D-ribose + H2O = ADP-D-ribose + acetate + H(+). It catalyses the reaction 2''-O-acetyl-ADP-D-ribose + H2O = ADP-D-ribose + acetate + H(+). It carries out the reaction 4-O-(ADP-D-ribosyl)-L-aspartyl-[protein] + H2O = L-aspartyl-[protein] + ADP-D-ribose + H(+). The catalysed reaction is 5-O-(ADP-D-ribosyl)-L-glutamyl-[protein] + H2O = L-glutamyl-[protein] + ADP-D-ribose + H(+). The enzyme catalyses alpha-NAD(+) + H2O = ADP-D-ribose + nicotinamide + H(+). With respect to regulation, subject to competitive inhibition by the product ADP-ribose. In terms of biological role, removes ADP-ribose from aspartate and glutamate residues in proteins bearing a single ADP-ribose moiety. Inactive towards proteins bearing poly-ADP-ribose. Deacetylates O-acetyl-ADP ribose, a signaling molecule generated by the deacetylation of acetylated lysine residues in histones and other proteins. Plays a role in estrogen signaling. Binds to androgen receptor (AR) and amplifies the transactivation function of AR in response to androgen. May play an important role in carcinogenesis and/or progression of hormone-dependent cancers by feed-forward mechanism that activates ESR1 transactivation. Could be an ESR1 coactivator, providing a positive feedback regulatory loop for ESR1 signal transduction. Could be involved in invasive growth by down-regulating CDH1 in endometrial cancer cells. Enhances ESR1-mediated transcription activity. The polypeptide is ADP-ribose glycohydrolase MACROD1 (MACROD1) (Bos taurus (Bovine)).